The sequence spans 243 residues: Probable phosphatase CLI_3563 (243 aa).

Positions 8, 10, 16, 41, 74, 102, 132, 192, and 194 each coordinate Zn(2+).

It belongs to the PHP family. The cofactor is Zn(2+).

The polypeptide is Probable phosphatase CLI_3563 (Clostridium botulinum (strain Langeland / NCTC 10281 / Type F)).